Consider the following 402-residue polypeptide: Choline dehydrogenase (402 aa).

It belongs to the iron-containing alcohol dehydrogenase family.

It carries out the reaction choline + NAD(+) = betaine aldehyde + NADH + H(+). The protein operates within amine and polyamine biosynthesis; betaine biosynthesis via choline pathway; betaine aldehyde from choline (dehydrogenase route): step 1/1. Involved in the biosynthesis of the osmoprotectant glycine betaine from choline. In Bacillus subtilis (strain 168), this protein is Choline dehydrogenase.